Here is a 932-residue protein sequence, read N- to C-terminus: DNA mismatch repair protein MutS (932 aa).

Over residues 1-13 the composition is skewed to acidic residues; it reads MTTDTDTDVDAGT. The tract at residues 1–26 is disordered; sequence MTTDTDTDVDAGTDLEPQPEGPPEKM. An ATP-binding site is contributed by 648 to 655; that stretch reads GPNMSGKS. Residues 865-892 are disordered; the sequence is NQQNQASDDDEIARSPRGADTNTDAGIN.

Belongs to the DNA mismatch repair MutS family.

This protein is involved in the repair of mismatches in DNA. It is possible that it carries out the mismatch recognition step. This protein has a weak ATPase activity. This Haloquadratum walsbyi (strain DSM 16790 / HBSQ001) protein is DNA mismatch repair protein MutS.